Consider the following 522-residue polypeptide: 2-isopropylmalate synthase (522 aa).

In terms of domain architecture, Pyruvate carboxyltransferase spans V5–Y267. Mn(2+)-binding residues include D14, H202, H204, and N238. The regulatory domain stretch occupies residues R392–V522.

It belongs to the alpha-IPM synthase/homocitrate synthase family. LeuA type 1 subfamily. Homodimer. The cofactor is Mn(2+).

The protein resides in the cytoplasm. It carries out the reaction 3-methyl-2-oxobutanoate + acetyl-CoA + H2O = (2S)-2-isopropylmalate + CoA + H(+). It participates in amino-acid biosynthesis; L-leucine biosynthesis; L-leucine from 3-methyl-2-oxobutanoate: step 1/4. Its function is as follows. Catalyzes the condensation of the acetyl group of acetyl-CoA with 3-methyl-2-oxobutanoate (2-ketoisovalerate) to form 3-carboxy-3-hydroxy-4-methylpentanoate (2-isopropylmalate). This is 2-isopropylmalate synthase from Erwinia tasmaniensis (strain DSM 17950 / CFBP 7177 / CIP 109463 / NCPPB 4357 / Et1/99).